The chain runs to 339 residues: DNA-directed RNA polymerase subunit alpha (339 aa).

Residues 1 to 233 (MVREEVAGST…DLFLPFLHAE (233 aa)) form an alpha N-terminal domain (alpha-NTD) region. Positions 264 to 339 (KKGIPLNCIF…IDLLKNKLSF (76 aa)) are alpha C-terminal domain (alpha-CTD).

It belongs to the RNA polymerase alpha chain family. In plastids the minimal PEP RNA polymerase catalytic core is composed of four subunits: alpha, beta, beta', and beta''. When a (nuclear-encoded) sigma factor is associated with the core the holoenzyme is formed, which can initiate transcription.

The protein localises to the plastid. Its subcellular location is the chloroplast. The enzyme catalyses RNA(n) + a ribonucleoside 5'-triphosphate = RNA(n+1) + diphosphate. Functionally, DNA-dependent RNA polymerase catalyzes the transcription of DNA into RNA using the four ribonucleoside triphosphates as substrates. In Aegilops uniaristata (Goatgrass), this protein is DNA-directed RNA polymerase subunit alpha.